The sequence spans 271 residues: Urease accessory protein UreD (271 aa).

The protein belongs to the UreD family. UreD, UreF and UreG form a complex that acts as a GTP-hydrolysis-dependent molecular chaperone, activating the urease apoprotein by helping to assemble the nickel containing metallocenter of UreC. The UreE protein probably delivers the nickel.

Its subcellular location is the cytoplasm. Required for maturation of urease via the functional incorporation of the urease nickel metallocenter. This is Urease accessory protein UreD from Azorhizobium caulinodans (strain ATCC 43989 / DSM 5975 / JCM 20966 / LMG 6465 / NBRC 14845 / NCIMB 13405 / ORS 571).